The following is a 367-amino-acid chain: Protein TlpB (367 aa).

5 helical membrane-spanning segments follow: residues 15–35 (ILIS…SPYF), 53–73 (IIAP…GILI), 83–103 (IIPI…YVTF), 124–144 (IQAI…FFLL), and 153–173 (FYVV…LAPI).

The protein localises to the membrane. The chain is Protein TlpB (tlpB) from Flavobacterium psychrophilum.